The following is a 308-amino-acid chain: Pantothenate kinase (308 aa).

ATP is bound at residue 90 to 97 (GSVAVGKS).

The protein belongs to the prokaryotic pantothenate kinase family.

The protein resides in the cytoplasm. The enzyme catalyses (R)-pantothenate + ATP = (R)-4'-phosphopantothenate + ADP + H(+). It functions in the pathway cofactor biosynthesis; coenzyme A biosynthesis; CoA from (R)-pantothenate: step 1/5. The sequence is that of Pantothenate kinase from Sorangium cellulosum (strain So ce56) (Polyangium cellulosum (strain So ce56)).